A 110-amino-acid polypeptide reads, in one-letter code: Iron-sulfur cluster assembly protein CyaY (110 aa).

It belongs to the frataxin family.

Functionally, involved in iron-sulfur (Fe-S) cluster assembly. May act as a regulator of Fe-S biogenesis. The protein is Iron-sulfur cluster assembly protein CyaY of Pseudomonas putida (strain GB-1).